Here is a 132-residue protein sequence, read N- to C-terminus: Small ribosomal subunit protein uS8 (132 aa).

The protein belongs to the universal ribosomal protein uS8 family. Part of the 30S ribosomal subunit. Contacts proteins S5 and S12.

Its function is as follows. One of the primary rRNA binding proteins, it binds directly to 16S rRNA central domain where it helps coordinate assembly of the platform of the 30S subunit. This chain is Small ribosomal subunit protein uS8, found in Mycoplasmopsis synoviae (strain 53) (Mycoplasma synoviae).